A 1358-amino-acid chain; its full sequence is MAYSYTEKKRIRKDFSKLPDVMDVPYLLAIQLDSYREFLQAGVSKDKLRDVGLHAAFKSVFPIISYSGNAALEYVGYRLGEPAFDVKECVLRGVTFAVPLRVKVRLIIFDKESSNKAIKDIKEQEVYMGEIPLMTENGTFIVNGTERVIVSQLHRSPGVFFDHDRGKTHSSGKLLYSARIIPYRGSWLDFEFDPKDAVFVRIDRRRKLPASVLLRALGYSTEEVLDIFYDTNVFHVTEQGLSLELVPQRLRGEIAVFDIKDASGKVIVEQGRRITARHINQLEKAGIKELDVPLEYVLGRTSAKVIVHPSTGEIIAECNSELTQDLLVKIAKAQVVRIETLYTNDIDCGPFISDTLKIDSTTNQLEALVEIYRMMRPGEPPTKDAAETLFNNLFFSAERYDLSAVGRMKFNRRIGREEIEGAGVLSREDIVDVLKTLVDIRNGKGIVDDIDHLGNRRVRCVGEMAENQFRVGLVRVERAVKERLSMAESEGLMPQDLINAKPVAAAVKEFFGSSQLSQFMDQNNPLSEITHKRRVSALGPGGLTRERAGFEVRDVHPTHYGRVCPIETPEGPNIGLINSLAAYARTNQYGFLESPYRVVKEGQVTDEIVFLSAIEEADHVIAQASATLDENGRLIDELVAVRHLNEFTVKAPEDVTLMDVSPRQVVSVAASLIPFLEHDDANRALMGSNMQRQAVPTLRADKPLVGTGMERNVARDSGVCVVARRGGVIDSVDASRIVVRVNNDEVETGEAGVDIYNLTKYTRSNQNTCINQRPLVSKGDQVARGDIMADGPSTDMGELALGQNMRVAFMPWNGFNFEDSICLSERVVQEDRFTTIHIQELTCVARDTKLGPEEITADIPNVGEAALNKLDEAGIVYVGAEVMAGDILVGKVTPKGETQLTPEEKLLRAIFGEKASDVKDTSLRVPTGTKGTVIDVQVFTRDGVERDSRALAIERMQLDEIRKDLNEEFRIVEGATFERLRAALVGAVCEGGAGLKKGTEIDDGILDGLERGQWFKLRMADDALNEQLEKAQAYLADRRQLLDDKFEDKKRKLQQGDDLAPGVLKIVKVYLAIKRRIQPGDKMAGRHGNKGVVSVIMPVEDMPYDANGTPVDIVLNPLGVPSRMNVGQILETHLGLAAKGLGEKINRMLEEQRKVAELRQFLGEVYNEIGGRQKEDLDSLSDSEILDLASNLRGGVPMATPVFDGARETEIKAMLKLADLPESGQMRLFDGRTGNQFERPTTVGYMYMLKLNHLVDDKMHARSTGSYSLVTQQPLGGKAQFGGQRFGEMEVWALEAYGAAYTLQEMLTVKSDDVNGRTKMYKNIVDGDHRMEAGMPESFNVLIKEIRSLGIDIELETE.

Belongs to the RNA polymerase beta chain family. The RNAP catalytic core consists of 2 alpha, 1 beta, 1 beta' and 1 omega subunit. When a sigma factor is associated with the core the holoenzyme is formed, which can initiate transcription.

It catalyses the reaction RNA(n) + a ribonucleoside 5'-triphosphate = RNA(n+1) + diphosphate. In terms of biological role, DNA-dependent RNA polymerase catalyzes the transcription of DNA into RNA using the four ribonucleoside triphosphates as substrates. In Azotobacter vinelandii (strain DJ / ATCC BAA-1303), this protein is DNA-directed RNA polymerase subunit beta.